The chain runs to 131 residues: Small ribosomal subunit protein eS8 (131 aa).

Positions 1–38 (MKLGAYYKGGDLKKPSGGKKRKVRRTKKKALGGGPPQI) are disordered. Basic residues predominate over residues 16–30 (SGGKKRKVRRTKKKA).

This sequence belongs to the eukaryotic ribosomal protein eS8 family. As to quaternary structure, part of the 30S ribosomal subunit.

The protein is Small ribosomal subunit protein eS8 of Pyrobaculum arsenaticum (strain DSM 13514 / JCM 11321 / PZ6).